A 155-amino-acid chain; its full sequence is D-aminoacyl-tRNA deacylase (155 aa).

Residues 137-138 (GP) carry the Gly-cisPro motif, important for rejection of L-amino acids motif.

This sequence belongs to the DTD family. As to quaternary structure, homodimer.

The protein resides in the cytoplasm. It carries out the reaction glycyl-tRNA(Ala) + H2O = tRNA(Ala) + glycine + H(+). The enzyme catalyses a D-aminoacyl-tRNA + H2O = a tRNA + a D-alpha-amino acid + H(+). Its function is as follows. An aminoacyl-tRNA editing enzyme that deacylates mischarged D-aminoacyl-tRNAs. Also deacylates mischarged glycyl-tRNA(Ala), protecting cells against glycine mischarging by AlaRS. Acts via tRNA-based rather than protein-based catalysis; rejects L-amino acids rather than detecting D-amino acids in the active site. By recycling D-aminoacyl-tRNA to D-amino acids and free tRNA molecules, this enzyme counteracts the toxicity associated with the formation of D-aminoacyl-tRNA entities in vivo and helps enforce protein L-homochirality. This is D-aminoacyl-tRNA deacylase from Geotalea uraniireducens (strain Rf4) (Geobacter uraniireducens).